A 546-amino-acid polypeptide reads, in one-letter code: Alpha-taxilin (546 aa).

Disordered stretches follow at residues 1–170 (MKNQ…GLGK) and 482–546 (NKRV…SARA). The span at 11 to 21 (AKQSNPKSSPG) shows a compositional bias: polar residues. 2 stretches are compositionally biased toward basic and acidic residues: residues 70–80 (DVSEELSRQLE) and 143–158 (EEIR…DHRR). S72 carries the post-translational modification Phosphoserine. Positions 186-491 (EEKLAALCKK…NKRVQDLSAG (306 aa)) form a coiled coil. S515 is modified (phosphoserine). Polar residues predominate over residues 530–546 (TEASGQTGPQEPTSARA).

It belongs to the taxilin family. Binds to the C-terminal coiled coil region of syntaxin family members STX1A, STX3A and STX4A, but not when these proteins are complexed with SNAP25, VAMP2 or STXBP1, suggesting that it interacts with syntaxins that do not form the SNARE complex. As to expression, ubiquitous, with much higher expression in heart, kidney, liver and pancreas.

In terms of biological role, may be involved in intracellular vesicle traffic and potentially in calcium-dependent exocytosis in neuroendocrine cells. The polypeptide is Alpha-taxilin (TXLNA) (Homo sapiens (Human)).